The following is a 238-amino-acid chain: ATP synthase subunit a (238 aa).

The next 5 helical transmembrane spans lie at 15 to 35, 76 to 96, 111 to 131, 167 to 187, and 208 to 230; these read IFNL…FVFI, YSLF…LGLM, PTAN…LTHI, LALR…LLLL, and AFSV…VYLG.

It belongs to the ATPase A chain family. F-type ATPases have 2 components, CF(1) - the catalytic core - and CF(0) - the membrane proton channel. CF(1) has five subunits: alpha(3), beta(3), gamma(1), delta(1), epsilon(1). CF(0) has three main subunits: a(1), b(2) and c(9-12). The alpha and beta chains form an alternating ring which encloses part of the gamma chain. CF(1) is attached to CF(0) by a central stalk formed by the gamma and epsilon chains, while a peripheral stalk is formed by the delta and b chains.

It localises to the cell membrane. Functionally, key component of the proton channel; it plays a direct role in the translocation of protons across the membrane. The protein is ATP synthase subunit a of Streptococcus pneumoniae (strain ATCC BAA-255 / R6).